Reading from the N-terminus, the 972-residue chain is Peptidyl-glycine alpha-amidating monooxygenase (972 aa).

A signal peptide spans 1–20; it reads MAGFRSLLVLLLVFPSGCVG. The peptidylglycine alpha-hydroxylating monooxygenase stretch occupies residues 1-494; that stretch reads MAGFRSLLVL…EGTWEPEHTG (494 aa). The propeptide occupies 21–30; that stretch reads FRSPLSVFKR. The Intragranular segment spans residues 31–873; the sequence is FKETTRSFSN…VPAVLITTLL (843 aa). 5 cysteine pairs are disulfide-bonded: Cys42/Cys181, Cys76/Cys121, Cys109/Cys126, Cys222/Cys329, and Cys288/Cys310. Cu(2+) is bound by residues His102 and His103. The Cu(2+) site is built by His167, His237, His239, and Met309. The segment at 495-817 is peptidyl-alpha-hydroxyglycine alpha-amidating lyase; that stretch reads DFHVEEALDW…STEKMEHRSV (323 aa). NHL repeat units lie at residues 498–541, 567–608, 617–662, and 670–714; these read VEEA…NSFD, AAVL…LDPK, LGRS…FSPS, and GEAS…FKTD. A Ca(2+)-binding site is contributed by Val517. Arg530 contacts a protein. His582 provides a ligand contact to Zn(2+). A Ca(2+)-binding site is contributed by Leu584. An intrachain disulfide couples Cys631 to Cys652. Tyr651 contributes to the a protein binding site. Position 687 (His687) interacts with Zn(2+). Cys699 and Cys710 are disulfide-bonded. Position 703 (Arg703) interacts with a protein. A glycan (N-linked (GlcNAc...) asparagine) is linked at Asn762. An NHL 5 repeat occupies 766-809; it reads GEIIDVFKPVRKHFDMPHDIAASEDGTVYVGDAHTNTVWKFTST. Zn(2+) is bound at residue His783. Asp784 contacts Ca(2+). Residues 874–897 form a helical membrane-spanning segment; it reads VIPVVVLLAIALFIRWKKSRAFGD. Over 898-972 the chain is Cytoplasmic; that stretch reads SERKLEASSG…APPPAPAPSS (75 aa). The interaction with RASSF9 stretch occupies residues 925-942; the sequence is NFFASRKGYSRKGFDRLS. Ser929 and Ser942 each carry phosphoserine. The tract at residues 937-972 is disordered; it reads GFDRLSTEGSDQEKDEDASESEEEYSAPPPAPAPSS. Phosphothreonine is present on Thr943. Ser946 bears the Phosphoserine; by UHMK1 mark. The span at 949 to 961 shows a compositional bias: acidic residues; sequence EKDEDASESEEEY. Residue Ser957 is modified to Phosphoserine. Positions 963 to 972 are enriched in pro residues; it reads APPPAPAPSS.

In the C-terminal section; belongs to the peptidyl-alpha-hydroxyglycine alpha-amidating lyase family. This sequence in the N-terminal section; belongs to the copper type II ascorbate-dependent monooxygenase family. Monomer. Interacts with RASSF9. It depends on Zn(2+) as a cofactor. Cu(2+) is required as a cofactor.

It is found in the cytoplasmic vesicle. The protein resides in the secretory vesicle membrane. The catalysed reaction is a [peptide]-C-terminal glycine + 2 L-ascorbate + O2 = a [peptide]-C-terminal (2S)-2-hydroxyglycine + 2 monodehydro-L-ascorbate radical + H2O. The enzyme catalyses a [peptide]-C-terminal (2S)-2-hydroxyglycine = a [peptide]-C-terminal amide + glyoxylate. It carries out the reaction N-dodecanoylglycine + 2 L-ascorbate + O2 = N-dodecanoyl-(2S)-hydroxyglycine + 2 monodehydro-L-ascorbate radical + H2O. It catalyses the reaction N-dodecanoyl-(2S)-hydroxyglycine = dodecanamide + glyoxylate. The catalysed reaction is N-(9Z,12Z,15Z)-octadecatrienoylglycine + 2 L-ascorbate + O2 = N-(9Z,12Z,15Z)-octadecatrienoyl-(2S)-hydroxyglycine + 2 monodehydro-L-ascorbate radical + H2O. The enzyme catalyses N-(9Z,12Z,15Z)-octadecatrienoyl-(2S)-hydroxyglycine = (9Z,12Z,15Z)-octadecatrienamide + glyoxylate. It carries out the reaction N-(9Z-octadecenoyl)glycine + 2 L-ascorbate + O2 = N-(9Z-octadecenoyl)-(2S)-hydroxyglycine + 2 monodehydro-L-ascorbate radical + H2O. It catalyses the reaction N-(9Z-octadecenoyl)-(2S)-hydroxyglycine = (9Z)-octadecenamide + glyoxylate. The catalysed reaction is N-tetradecanoylglycine + 2 L-ascorbate + O2 = N-tetradecanoyl-(2S)-hydroxyglycine + 2 monodehydro-L-ascorbate radical + H2O. The enzyme catalyses N-tetradecanoyl-(2S)-hydroxyglycine = tetradecamide + glyoxylate. It carries out the reaction N-decanoylglycine + 2 L-ascorbate + O2 = N-decanoyl-(2S)-hydroxyglycine + 2 monodehydro-L-ascorbate radical + H2O. It catalyses the reaction N-decanoyl-(2S)-hydroxyglycine = decanamide + glyoxylate. The catalysed reaction is N-octanoylglycine + 2 L-ascorbate + O2 = N-octanoyl-(2S)-hydroxyglycine + 2 monodehydro-L-ascorbate radical + H2O. The enzyme catalyses N-octanoyl-(2S)-hydroxyglycine = octanamide + glyoxylate. PAM activity is inhibited by EDTA, phenylglyoxal and diethyl pyrocarbonate. PAL activity is stimulated by cadmium and inhibited by mercury. Functionally, bifunctional enzyme that catalyzes amidation of the C-terminus of proteins. Alpha-amidation is present at the C-terminus of many endocrine hormones and neuropeptides and is required for their activity. C-terminal amidation also takes place in response to protein fragmentation triggered by oxidative stress, promoting degradation of amidated protein fragments by the proteasome. Alpha-amidation involves two sequential reactions, both of which are catalyzed by separate catalytic domains of the enzyme. The first step, catalyzed by peptidyl alpha-hydroxylating monooxygenase (PHM) domain, is the copper-, ascorbate-, and O2- dependent stereospecific hydroxylation (with S stereochemistry) at the alpha-carbon (C-alpha) of the C-terminal glycine of the peptidylglycine substrate. The second step, catalyzed by the peptidylglycine amidoglycolate lyase (PAL) domain, is the zinc-dependent cleavage of the N-C-alpha bond, producing the alpha-amidated peptide and glyoxylate. Similarly, catalyzes the two-step conversion of an N-fatty acylglycine to a primary fatty acid amide and glyoxylate. This chain is Peptidyl-glycine alpha-amidating monooxygenase (PAM), found in Bos taurus (Bovine).